Here is a 331-residue protein sequence, read N- to C-terminus: Protein Brevis radix-like 1 (331 aa).

The tract at residues Met1–Phe111 is disordered. Polar residues-rich tracts occupy residues Ser25–Ile41 and Phe48–Leu66. The BRX 1 domain occupies Lys137 to Asn192. 2 disordered regions span residues Leu201 to His246 and Thr258 to Val279. Over residues Asp221–Asn235 the composition is skewed to basic and acidic residues. The BRX 2 domain occupies Gly276–Leu331.

It belongs to the BRX family. In terms of assembly, heterodimer with BRXL1. In terms of tissue distribution, expressed in roots.

The protein localises to the nucleus. May act as a regulator of cell proliferation and elongation in the root. The protein is Protein Brevis radix-like 1 (BRXL1) of Arabidopsis thaliana (Mouse-ear cress).